We begin with the raw amino-acid sequence, 217 residues long: Deoxyribose-phosphate aldolase (217 aa).

Catalysis depends on D89, which acts as the Proton donor/acceptor. The active-site Schiff-base intermediate with acetaldehyde is K151. Residue K180 is the Proton donor/acceptor of the active site.

The protein belongs to the DeoC/FbaB aldolase family. DeoC type 1 subfamily.

The protein localises to the cytoplasm. It carries out the reaction 2-deoxy-D-ribose 5-phosphate = D-glyceraldehyde 3-phosphate + acetaldehyde. It functions in the pathway carbohydrate degradation; 2-deoxy-D-ribose 1-phosphate degradation; D-glyceraldehyde 3-phosphate and acetaldehyde from 2-deoxy-alpha-D-ribose 1-phosphate: step 2/2. In terms of biological role, catalyzes a reversible aldol reaction between acetaldehyde and D-glyceraldehyde 3-phosphate to generate 2-deoxy-D-ribose 5-phosphate. This is Deoxyribose-phosphate aldolase from Metamycoplasma arthritidis (strain 158L3-1) (Mycoplasma arthritidis).